The following is a 530-amino-acid chain: NADH-quinone oxidoreductase subunit C/D (530 aa).

An NADH dehydrogenase I subunit C region spans residues 1 to 144; it reads MEEIKYIEPA…NPLRMDNEET (144 aa). The segment at 171 to 530 is NADH dehydrogenase I subunit D; it reads EYVVNIGPQH…LDYVVPDIDR (360 aa).

The protein in the N-terminal section; belongs to the complex I 30 kDa subunit family. It in the C-terminal section; belongs to the complex I 49 kDa subunit family. In terms of assembly, NDH-1 is composed of 13 different subunits. Subunits NuoB, CD, E, F, and G constitute the peripheral sector of the complex.

The protein localises to the cell inner membrane. It carries out the reaction a quinone + NADH + 5 H(+)(in) = a quinol + NAD(+) + 4 H(+)(out). In terms of biological role, NDH-1 shuttles electrons from NADH, via FMN and iron-sulfur (Fe-S) centers, to quinones in the respiratory chain. The immediate electron acceptor for the enzyme in this species is believed to be a menaquinone. Couples the redox reaction to proton translocation (for every two electrons transferred, four hydrogen ions are translocated across the cytoplasmic membrane), and thus conserves the redox energy in a proton gradient. This Bacteroides fragilis (strain ATCC 25285 / DSM 2151 / CCUG 4856 / JCM 11019 / LMG 10263 / NCTC 9343 / Onslow / VPI 2553 / EN-2) protein is NADH-quinone oxidoreductase subunit C/D.